Consider the following 603-residue polypeptide: Insulin-like growth factor-binding protein complex acid labile subunit (603 aa).

Residues Met-1 to Cys-23 form the signal peptide. An LRRNT domain is found at Ala-32 to Val-74. 2 disulfide bridges follow: Cys-41/Cys-47 and Cys-45/Cys-60. Asn-64, Asn-85, and Asn-96 each carry an N-linked (GlcNAc...) asparagine glycan. 19 LRR repeats span residues Ser-75 to Asn-96, Ser-99 to Gly-120, Asn-123 to His-144, Ser-147 to Gly-168, His-171 to Gly-192, Asn-195 to Gly-216, Glu-219 to His-240, Arg-243 to Gly-264, Ala-267 to Gly-288, Gly-291 to Asp-312, Phe-315 to Gly-336, Gln-339 to Gly-360, Asn-363 to Gly-384, Arg-387 to Gly-408, Gly-411 to Gly-432, Glu-435 to Gly-456, Gln-459 to Pro-480, Arg-483 to Ser-504, and Arg-507 to Glu-528. N-linked (GlcNAc...) asparagine glycosylation is present at Asn-368. Asn-515 carries an N-linked (GlcNAc...) asparagine glycan. In terms of domain architecture, LRRCT spans Asn-535–Cys-603. Cystine bridges form between Cys-539–Cys-581, Cys-541–Cys-603, and Cys-565–Cys-570. N-linked (GlcNAc...) asparagine glycosylation is found at Asn-578 and Asn-586.

Forms a ternary complex with IGF1 and IGFBP3.

Its subcellular location is the secreted. It localises to the extracellular space. May have an important role in regulating the access of circulating IGFs to the tissues. This Mus musculus (Mouse) protein is Insulin-like growth factor-binding protein complex acid labile subunit (Igfals).